Reading from the N-terminus, the 119-residue chain is Early E3 13.3 kDa protein (119 aa).

This chain is Early E3 13.3 kDa protein, found in Canine adenovirus serotype 1 (strain Utrecht) (CAdV-1).